We begin with the raw amino-acid sequence, 412 residues long: Putative competence-damage inducible protein (412 aa).

Belongs to the CinA family.

The polypeptide is Putative competence-damage inducible protein (Bacillus anthracis).